A 180-amino-acid chain; its full sequence is Large ribosomal subunit protein uL5 (180 aa).

This sequence belongs to the universal ribosomal protein uL5 family. As to quaternary structure, part of the 50S ribosomal subunit; part of the 5S rRNA/L5/L18/L25 subcomplex. Contacts the 5S rRNA and the P site tRNA. Forms a bridge to the 30S subunit in the 70S ribosome.

Functionally, this is one of the proteins that bind and probably mediate the attachment of the 5S RNA into the large ribosomal subunit, where it forms part of the central protuberance. In the 70S ribosome it contacts protein S13 of the 30S subunit (bridge B1b), connecting the 2 subunits; this bridge is implicated in subunit movement. Contacts the P site tRNA; the 5S rRNA and some of its associated proteins might help stabilize positioning of ribosome-bound tRNAs. In Chlamydia pneumoniae (Chlamydophila pneumoniae), this protein is Large ribosomal subunit protein uL5.